The following is a 222-amino-acid chain: N-acetyltransferase 8F1 (222 aa).

Residues 53-73 traverse the membrane as a helical segment; that stretch reads LVLVSGSWILAVICIFFLLLL. The N-acetyltransferase domain maps to 69–220; the sequence is FLLLLLRLLA…CTIQLKYSFP (152 aa).

The protein belongs to the camello family.

It is found in the membrane. In terms of biological role, may play a role in regulation of gastrulation. The sequence is that of N-acetyltransferase 8F1 from Mus musculus (Mouse).